The primary structure comprises 911 residues: ATP-dependent DNA helicase Q-like 5 (911 aa).

The tract at residues 1–84 is disordered; it reads MDFDSDSDGS…PPPSPLFTNL (84 aa). Over residues 20–48 the composition is skewed to low complexity; the sequence is SFPSSPPQLQSPAKHVPPVSRKMTSSSSR. The span at 54–79 shows a compositional bias: pro residues; the sequence is PTHPPPNPSQEAPVPSPYPPPPPPSP. In terms of domain architecture, Helicase ATP-binding spans 278-448; that stretch reads IKMILGGSST…MSSLEIPSTN (171 aa). 291-298 contributes to the ATP binding site; that stretch reads LPTGAGKS. Residues 390 to 393 carry the DEAH box motif; the sequence is DEAH. The Helicase C-terminal domain occupies 470 to 628; it reads RMKDLLILME…VFSTETKQHE (159 aa).

This sequence belongs to the helicase family. RecQ subfamily. In terms of tissue distribution, mostly expressed in roots, seedlings, shoots, shoot apical mersitem, flowers, and siliques.

Its subcellular location is the nucleus. It carries out the reaction Couples ATP hydrolysis with the unwinding of duplex DNA by translocating in the 3'-5' direction.. The catalysed reaction is ATP + H2O = ADP + phosphate + H(+). In terms of biological role, 3'-5' DNA helicase that may play a role in the repair of DNA. This chain is ATP-dependent DNA helicase Q-like 5 (RECQL5), found in Arabidopsis thaliana (Mouse-ear cress).